Reading from the N-terminus, the 73-residue chain is Disintegrin molossin (73 aa).

Residues 1-73 (EAGIECDCGS…ADCPRNRFHA (73 aa)) enclose the Disintegrin domain. 6 disulfides stabilise this stretch: Cys6–Cys21, Cys8–Cys16, Cys15–Cys38, Cys29–Cys35, Cys34–Cys59, and Cys47–Cys66. The Cell attachment site signature appears at 51–53 (RGD).

This sequence belongs to the venom metalloproteinase (M12B) family. P-II subfamily. P-IIa sub-subfamily. As to quaternary structure, monomer (disintegrin). As to expression, expressed by the venom gland.

It is found in the secreted. Its function is as follows. Inhibits fibrinogen interaction with platelets. Acts by binding to alpha-IIb/beta-3 (ITGA2B/ITGB3) on the platelet surface and inhibits aggregation induced by ADP, thrombin, platelet-activating factor and collagen. This chain is Disintegrin molossin, found in Crotalus molossus molossus (Northern black-tailed rattlesnake).